The following is a 358-amino-acid chain: Short chain dehydrogenase sor7 (358 aa).

Positions 1–22 (MSSPAIGQPPIPPTPTDANISG) are disordered. Positions 34, 88, 115, 206, 210, 238, and 240 each coordinate NADP(+). The Proton donor role is filled by tyrosine 206. Lysine 210 serves as the catalytic Lowers pKa of active site Tyr.

Belongs to the short-chain dehydrogenases/reductases (SDR) family.

The protein operates within secondary metabolite biosynthesis. Short chain dehydrogenase; part of the SOR gene cluster that mediates the biosynthesis of sorbicillinoids, a diverse group of yellow secondary metabolites that restrict growth of competing pathogenic fungi but not of bacteria. Sorbicillinoids biosynthesis requires the action of two PKSs. The SOR cluster is required for the production of trichodimerol and dihydrotrichotetronin, with sor2 being sufficient for production of trichodimerol, but not dihydrotrichotetronin in the light. Sor1 iteratively combines three acetyl units and the growing chain is modified by the ketoacyl reductase subunit, and optional by the enoyl reductase subunit in the second cycle. The polyketide is then handed over to the PKS sor2, which adds three more acetyl units, and two methyl groups. Sor2 releases an aldehyde, which undergoes spontaneous cyclization resulting in the formation of sorbicillin or 2',3'-dihydrosorbicillin. The monooxygenase sor5 oxidizes sorbicillin and 2',3'-dihydrosorbicillin to 2',3'-dihydrosorbicillinol and sorbicillinol, respectively. The oxidoreductase sor8 further converts sorbicillinol into oxosorbicillinol. Sorbicillinol is the building block for the other sorbicillinoids such as disorbicillinol, bisvertinolon, dihydrobisvertinolone, and dihydrotrichotetronine. This is Short chain dehydrogenase sor7 from Hypocrea jecorina (strain QM6a) (Trichoderma reesei).